Here is a 248-residue protein sequence, read N- to C-terminus: DNA repair protein RecO (248 aa).

Belongs to the RecO family.

Involved in DNA repair and RecF pathway recombination. The polypeptide is DNA repair protein RecO (Bradyrhizobium sp. (strain ORS 278)).